A 573-amino-acid chain; its full sequence is Urease subunit alpha (573 aa).

Residues 136–573 (GGIDCHVHFI…LPMAQRYFLF (438 aa)) enclose the Urease domain. Ni(2+) contacts are provided by His141, His143, and Lys224. Lys224 carries the post-translational modification N6-carboxylysine. His226 lines the substrate pocket. Positions 253 and 279 each coordinate Ni(2+). The active-site Proton donor is His327. Position 367 (Asp367) interacts with Ni(2+).

It belongs to the metallo-dependent hydrolases superfamily. Urease alpha subunit family. As to quaternary structure, heterotrimer of UreA (gamma), UreB (beta) and UreC (alpha) subunits. Three heterotrimers associate to form the active enzyme. The cofactor is Ni cation. In terms of processing, carboxylation allows a single lysine to coordinate two nickel ions.

It is found in the cytoplasm. It catalyses the reaction urea + 2 H2O + H(+) = hydrogencarbonate + 2 NH4(+). It functions in the pathway nitrogen metabolism; urea degradation; CO(2) and NH(3) from urea (urease route): step 1/1. This chain is Urease subunit alpha, found in Rhodococcus opacus (strain B4).